We begin with the raw amino-acid sequence, 536 residues long: Chaperonin GroEL 2 (536 aa).

ATP contacts are provided by residues 29–32, 86–90, Gly413, 476–478, and Asp492; these read TLGP, DGTTT, and NAA.

Belongs to the chaperonin (HSP60) family. As to quaternary structure, forms a cylinder of 14 subunits composed of two heptameric rings stacked back-to-back. Interacts with the co-chaperonin GroES.

The protein localises to the cytoplasm. The catalysed reaction is ATP + H2O + a folded polypeptide = ADP + phosphate + an unfolded polypeptide.. Its function is as follows. Together with its co-chaperonin GroES, plays an essential role in assisting protein folding. The GroEL-GroES system forms a nano-cage that allows encapsulation of the non-native substrate proteins and provides a physical environment optimized to promote and accelerate protein folding. The sequence is that of Chaperonin GroEL 2 from Moorella thermoacetica (strain ATCC 39073 / JCM 9320).